The following is a 345-amino-acid chain: S-adenosylmethionine:tRNA ribosyltransferase-isomerase (345 aa).

It belongs to the QueA family. Monomer.

The protein resides in the cytoplasm. The enzyme catalyses 7-aminomethyl-7-carbaguanosine(34) in tRNA + S-adenosyl-L-methionine = epoxyqueuosine(34) in tRNA + adenine + L-methionine + 2 H(+). It functions in the pathway tRNA modification; tRNA-queuosine biosynthesis. Transfers and isomerizes the ribose moiety from AdoMet to the 7-aminomethyl group of 7-deazaguanine (preQ1-tRNA) to give epoxyqueuosine (oQ-tRNA). This Azoarcus sp. (strain BH72) protein is S-adenosylmethionine:tRNA ribosyltransferase-isomerase.